The sequence spans 394 residues: MQPRRIVLLGSTGSIGTQAIDVVDGAPHLFEVVALSAGGGNLELLARQAVHTKAKAVGTASGDATALQRLIDDAARATGVAGYRPEIITGPDASTRIAEIEADVVLNGITGSIGLAPTLAALKSGATLALANKESLIVGGALVKAAAREGQIVPVDSEHSAIAQCLRSGTAAEVDRLILTASGGPFRGRTREELHNVSPEEALAHPTWDMGLMVTTNSASLVNKGLEVIEAHLLFDIPLDRIDVVVHPQSVVHSMVQFVDGSIIAQASPPDMRLPIALGLGWPDRVPKAATPCDWTQATSWTFEPLDAEAFPAVNLAKDAAKQGSTYPAVFNAANEEAVMAFHAGRIRFTDIVDTIEAVLSEHPGSSGLTVESVLDAEAWARARTHERLAVSSL.

The NADPH site is built by T12, G13, S14, I15, G38, N41, and N132. K133 provides a ligand contact to 1-deoxy-D-xylulose 5-phosphate. E134 contributes to the NADPH binding site. D156 provides a ligand contact to Mn(2+). Positions 157, 158, 182, and 205 each coordinate 1-deoxy-D-xylulose 5-phosphate. E158 is a Mn(2+) binding site. Residue G211 participates in NADPH binding. 4 residues coordinate 1-deoxy-D-xylulose 5-phosphate: S218, N223, K224, and E227. Residue E227 participates in Mn(2+) binding.

The protein belongs to the DXR family. Mg(2+) serves as cofactor. Mn(2+) is required as a cofactor.

The catalysed reaction is 2-C-methyl-D-erythritol 4-phosphate + NADP(+) = 1-deoxy-D-xylulose 5-phosphate + NADPH + H(+). Its pathway is isoprenoid biosynthesis; isopentenyl diphosphate biosynthesis via DXP pathway; isopentenyl diphosphate from 1-deoxy-D-xylulose 5-phosphate: step 1/6. In terms of biological role, catalyzes the NADPH-dependent rearrangement and reduction of 1-deoxy-D-xylulose-5-phosphate (DXP) to 2-C-methyl-D-erythritol 4-phosphate (MEP). The polypeptide is 1-deoxy-D-xylulose 5-phosphate reductoisomerase (Arthrobacter sp. (strain FB24)).